The primary structure comprises 404 residues: Glutamyl-tRNA reductase (404 aa).

Substrate contacts are provided by residues 47 to 50 (TCNR), Ser94, 99 to 101 (EQE), and Gln105. The Nucleophile role is filled by Cys48. 174-179 (GAGEMG) is an NADP(+) binding site.

As to quaternary structure, homotetramer.

The enzyme catalyses (S)-4-amino-5-oxopentanoate + tRNA(Glu) + NADP(+) = L-glutamyl-tRNA(Glu) + NADPH + H(+). The protein operates within porphyrin-containing compound metabolism; protoporphyrin-IX biosynthesis; 5-aminolevulinate from L-glutamyl-tRNA(Glu): step 1/2. Its activity is regulated as follows. Inhibited by heavy metal compounds, Zn(2+), and heme. Also competitively inhibited by glutamycin. Its function is as follows. Catalyzes the NADPH-dependent reduction of glutamyl-tRNA(Glu) to glutamate 1-semialdehyde (GSA). In the absence of NADPH, exhibits substrate esterase activity, leading to the release of glutamate from tRNA. The chain is Glutamyl-tRNA reductase (hemA) from Methanopyrus kandleri (strain AV19 / DSM 6324 / JCM 9639 / NBRC 100938).